The primary structure comprises 80 residues: Cytochrome c oxidase subunit 7B, mitochondrial (80 aa).

The N-terminal 24 residues, 1–24 (MLPLAKNALSRLQVRSIQQVVARQ), are a transit peptide targeting the mitochondrion. Residues 25-32 (SHQKKTPT) lie on the Mitochondrial matrix side of the membrane. Residues 33–59 (FHDKYGNAVLAGGSIFCISAWTYTATQ) traverse the membrane as a helical segment. At 60-80 (IGIEWNLSPVGRVTPKEWRDQ) the chain is on the mitochondrial intermembrane side.

Belongs to the cytochrome c oxidase VIIb family. In terms of assembly, component of the cytochrome c oxidase (complex IV, CIV), a multisubunit enzyme composed of 14 subunits. The complex is composed of a catalytic core of 3 subunits MT-CO1, MT-CO2 and MT-CO3, encoded in the mitochondrial DNA, and 11 supernumerary subunits COX4I, COX5A, COX5B, COX6A, COX6B, COX6C, COX7A, COX7B, COX7C, COX8 and NDUFA4, which are encoded in the nuclear genome. The complex exists as a monomer or a dimer and forms supercomplexes (SCs) in the inner mitochondrial membrane with NADH-ubiquinone oxidoreductase (complex I, CI) and ubiquinol-cytochrome c oxidoreductase (cytochrome b-c1 complex, complex III, CIII), resulting in different assemblies (supercomplex SCI(1)III(2)IV(1) and megacomplex MCI(2)III(2)IV(2)).

The protein resides in the mitochondrion inner membrane. It participates in energy metabolism; oxidative phosphorylation. Its function is as follows. Component of the cytochrome c oxidase, the last enzyme in the mitochondrial electron transport chain which drives oxidative phosphorylation. The respiratory chain contains 3 multisubunit complexes succinate dehydrogenase (complex II, CII), ubiquinol-cytochrome c oxidoreductase (cytochrome b-c1 complex, complex III, CIII) and cytochrome c oxidase (complex IV, CIV), that cooperate to transfer electrons derived from NADH and succinate to molecular oxygen, creating an electrochemical gradient over the inner membrane that drives transmembrane transport and the ATP synthase. Cytochrome c oxidase is the component of the respiratory chain that catalyzes the reduction of oxygen to water. Electrons originating from reduced cytochrome c in the intermembrane space (IMS) are transferred via the dinuclear copper A center (CU(A)) of subunit 2 and heme A of subunit 1 to the active site in subunit 1, a binuclear center (BNC) formed by heme A3 and copper B (CU(B)). The BNC reduces molecular oxygen to 2 water molecules using 4 electrons from cytochrome c in the IMS and 4 protons from the mitochondrial matrix. Plays a role in proper central nervous system (CNS) development in vertebrates. The protein is Cytochrome c oxidase subunit 7B, mitochondrial (Cox7b) of Rattus norvegicus (Rat).